A 294-amino-acid chain; its full sequence is Acetyl-coenzyme A carboxylase carboxyl transferase subunit beta (294 aa).

Residues 27–294 form the CoA carboxyltransferase N-terminal domain; that stretch reads LWHKCPSCDA…PSPVALPVTA (268 aa). The Zn(2+) site is built by Cys31, Cys34, Cys50, and Cys53. The C4-type zinc finger occupies 31–53; that stretch reads CPSCDAVLYRPELEKTLDVCPKC.

The protein belongs to the AccD/PCCB family. In terms of assembly, acetyl-CoA carboxylase is a heterohexamer composed of biotin carboxyl carrier protein (AccB), biotin carboxylase (AccC) and two subunits each of ACCase subunit alpha (AccA) and ACCase subunit beta (AccD). The cofactor is Zn(2+).

Its subcellular location is the cytoplasm. It carries out the reaction N(6)-carboxybiotinyl-L-lysyl-[protein] + acetyl-CoA = N(6)-biotinyl-L-lysyl-[protein] + malonyl-CoA. It participates in lipid metabolism; malonyl-CoA biosynthesis; malonyl-CoA from acetyl-CoA: step 1/1. Component of the acetyl coenzyme A carboxylase (ACC) complex. Biotin carboxylase (BC) catalyzes the carboxylation of biotin on its carrier protein (BCCP) and then the CO(2) group is transferred by the transcarboxylase to acetyl-CoA to form malonyl-CoA. The chain is Acetyl-coenzyme A carboxylase carboxyl transferase subunit beta from Ectopseudomonas mendocina (strain ymp) (Pseudomonas mendocina).